The primary structure comprises 553 residues: Arginine--tRNA ligase (553 aa).

The 'HIGH' region signature appears at 130–140 (ANPTGDLHIGH).

It belongs to the class-I aminoacyl-tRNA synthetase family. Monomer.

The protein localises to the cytoplasm. The catalysed reaction is tRNA(Arg) + L-arginine + ATP = L-arginyl-tRNA(Arg) + AMP + diphosphate. The protein is Arginine--tRNA ligase of Staphylococcus aureus (strain USA300 / TCH1516).